We begin with the raw amino-acid sequence, 92 residues long: Probable Fe(2+)-trafficking protein (92 aa).

The protein belongs to the Fe(2+)-trafficking protein family.

In terms of biological role, could be a mediator in iron transactions between iron acquisition and iron-requiring processes, such as synthesis and/or repair of Fe-S clusters in biosynthetic enzymes. The sequence is that of Probable Fe(2+)-trafficking protein from Shewanella halifaxensis (strain HAW-EB4).